We begin with the raw amino-acid sequence, 93 residues long: Large ribosomal subunit protein bL36m (93 aa).

The N-terminal 35 residues, 1–35, are a transit peptide targeting the mitochondrion; it reads MFLQTLRLTMPRMFLHMKPSPITITRACTVPSLLS.

It belongs to the bacterial ribosomal protein bL36 family. As to quaternary structure, component of the mitochondrial large ribosomal subunit (mt-LSU). Mature yeast 74S mitochondrial ribosomes consist of a small (37S) and a large (54S) subunit. The 37S small subunit contains a 15S ribosomal RNA (15S mt-rRNA) and 34 different proteins. The 54S large subunit contains a 21S rRNA (21S mt-rRNA) and 46 different proteins. bL36m has a zinc binding site.

The protein localises to the mitochondrion. Component of the mitochondrial ribosome (mitoribosome), a dedicated translation machinery responsible for the synthesis of mitochondrial genome-encoded proteins, including at least some of the essential transmembrane subunits of the mitochondrial respiratory chain. The mitoribosomes are attached to the mitochondrial inner membrane and translation products are cotranslationally integrated into the membrane. bL36m may be involved in a process influencing telomere capping. This is Large ribosomal subunit protein bL36m (RTC6) from Saccharomyces cerevisiae (strain ATCC 204508 / S288c) (Baker's yeast).